The chain runs to 972 residues: C-1-tetrahydrofolate synthase, mitochondrial (972 aa).

Residues 1 to 55 constitute a mitochondrion transit peptide; sequence MNVMVSFNQLRNYFLESNSLRPSKWLFQSYGTSSSANILNGKLLARKLQRSVAEE. Residues 56-340 are methylenetetrahydrofolate dehydrogenase and cyclohydrolase; sequence VQALKAKDRN…DLNPLELKKP (285 aa). Substrate-binding positions include 84-88 and 131-133; these read YVRMK and VQL. Residues 202 to 204 and S227 contribute to the NADP(+) site; that span reads GRS. Position 299 to 303 (299 to 303) interacts with substrate; that stretch reads PGGVG. A formyltetrahydrofolate synthetase region spans residues 341–972; that stretch reads VPSDIEIANS…CENGEIVGLS (632 aa). Position 405 to 412 (405 to 412) interacts with ATP; the sequence is TPFGEGKS.

This sequence in the N-terminal section; belongs to the tetrahydrofolate dehydrogenase/cyclohydrolase family. It in the C-terminal section; belongs to the formate--tetrahydrofolate ligase family. Homodimer.

It localises to the mitochondrion. The enzyme catalyses (6R)-5,10-methylene-5,6,7,8-tetrahydrofolate + NADP(+) = (6R)-5,10-methenyltetrahydrofolate + NADPH. The catalysed reaction is (6R)-5,10-methenyltetrahydrofolate + H2O = (6R)-10-formyltetrahydrofolate + H(+). It carries out the reaction (6S)-5,6,7,8-tetrahydrofolate + formate + ATP = (6R)-10-formyltetrahydrofolate + ADP + phosphate. It functions in the pathway one-carbon metabolism; tetrahydrofolate interconversion. In terms of biological role, mitochondrial isozyme of C-1-tetrahydrofolate synthase. The trifunctional enzyme catalyzes the interconversion of the one-carbon derivatives of tetrahydrofolate (THF) between different oxidation states by the enzymatic activities 10-formyltetrahydrofolate synthetase, 5,lO-methenyltetrahydrofolate cyclohydrolase, and 5,lO-methylenetetrahydrofolate dehydrogenase. This Schizosaccharomyces pombe (strain 972 / ATCC 24843) (Fission yeast) protein is C-1-tetrahydrofolate synthase, mitochondrial (ade9).